The following is a 44-amino-acid chain: Protein Tat (44 aa).

The tract at residues 1–44 (APEDSQSHQVSLSKQPASQAGGDPTGPKESKKKVESETETDPVP) is disordered. A compositionally biased stretch (polar residues) spans 7–18 (SHQVSLSKQPAS). A Glycyl lysine isopeptide (Lys-Gly) (interchain with G-Cter in ubiquitin) cross-link involves residue K14. The short motif at 21 to 23 (GGD) is the Cell attachment site element. A compositionally biased stretch (basic and acidic residues) spans 26–36 (GPKESKKKVES).

Belongs to the lentiviruses Tat family. In terms of assembly, interacts with host CCNT1. Associates with the P-TEFb complex composed at least of Tat, P-TEFb (CDK9 and CCNT1), TAR RNA, RNA Pol II. Recruits the HATs CREBBP, TAF1/TFIID, EP300, PCAF and GCN5L2. Interacts with host KAT5/Tip60; this interaction targets the latter to degradation. Interacts with the host deacetylase SIRT1. Interacts with host capping enzyme RNGTT; this interaction stimulates RNGTT. Binds to host KDR, and to the host integrins ITGAV/ITGB3 and ITGA5/ITGB1. Interacts with host KPNB1/importin beta-1 without previous binding to KPNA1/importin alpha-1. Interacts with EIF2AK2. Interacts with host nucleosome assembly protein NAP1L1; this interaction may be required for the transport of Tat within the nucleus, since the two proteins interact at the nuclear rim. Interacts with host C1QBP/SF2P32; this interaction involves lysine-acetylated Tat. Interacts with the host chemokine receptors CCR2, CCR3 and CXCR4. Interacts with host DPP4/CD26; this interaction may trigger an anti-proliferative effect. Interacts with host LDLR. Interacts with the host extracellular matrix metalloproteinase MMP1. Interacts with host PRMT6; this interaction mediates Tat's methylation. Interacts with, and is ubiquitinated by MDM2/Hdm2. Interacts with host PSMC3 and HTATIP2. Interacts with STAB1; this interaction may overcome SATB1-mediated repression of IL2 and IL2RA (interleukin) in T cells by binding to the same domain than HDAC1. Interacts (when acetylated) with human CDK13, thereby increasing HIV-1 mRNA splicing and promoting the production of the doubly spliced HIV-1 protein Nef. Acetylation by EP300, CREBBP, GCN5L2/GCN5 and PCAF regulates the transactivation activity of Tat. In terms of processing, phosphorylated by EIF2AK2 on serine and threonine residues adjacent to the basic region important for TAR RNA binding and function. Phosphorylation of Tat by EIF2AK2 is dependent on the prior activation of EIF2AK2 by dsRNA. Post-translationally, asymmetrical arginine methylation by host PRMT6 seems to diminish the transactivation capacity of Tat and affects the interaction with host CCNT1. Polyubiquitination by MDM2 does not target Tat to degradation, but activates its transactivation function and fosters interaction with CCNT1 and TAR RNA.

It is found in the host nucleus. The protein localises to the host nucleolus. It localises to the host cytoplasm. The protein resides in the secreted. Functionally, transcriptional activator that increases RNA Pol II processivity, thereby increasing the level of full-length viral transcripts. Recognizes a hairpin structure at the 5'-LTR of the nascent viral mRNAs referred to as the transactivation responsive RNA element (TAR) and recruits the cyclin T1-CDK9 complex (P-TEFb complex) that will in turn hyperphosphorylate the RNA polymerase II to allow efficient elongation. The CDK9 component of P-TEFb and other Tat-activated kinases hyperphosphorylate the C-terminus of RNA Pol II that becomes stabilized and much more processive. Other factors such as HTATSF1/Tat-SF1, SUPT5H/SPT5, and HTATIP2 are also important for Tat's function. Besides its effect on RNA Pol II processivity, Tat induces chromatin remodeling of proviral genes by recruiting the histone acetyltransferases (HATs) CREBBP, EP300 and PCAF to the chromatin. This also contributes to the increase in proviral transcription rate, especially when the provirus integrates in transcriptionally silent region of the host genome. To ensure maximal activation of the LTR, Tat mediates nuclear translocation of NF-kappa-B by interacting with host RELA. Through its interaction with host TBP, Tat may also modulate transcription initiation. Tat can reactivate a latently infected cell by penetrating in it and transactivating its LTR promoter. In the cytoplasm, Tat is thought to act as a translational activator of HIV-1 mRNAs. In terms of biological role, extracellular circulating Tat can be endocytosed by surrounding uninfected cells via the binding to several surface receptors such as CD26, CXCR4, heparan sulfate proteoglycans (HSPG) or LDLR. Neurons are rarely infected, but they internalize Tat via their LDLR. Endosomal low pH allows Tat to cross the endosome membrane to enter the cytosol and eventually further translocate into the nucleus, thereby inducing severe cell dysfunctions ranging from cell activation to cell death. Through its interaction with nuclear HATs, Tat is potentially able to control the acetylation-dependent cellular gene expression. Tat seems to inhibit the HAT activity of KAT5/Tip60 and TAF1, and consequently modify the expression of specific cellular genes. Modulates the expression of many cellular genes involved in cell survival, proliferation or in coding for cytokines (such as IL10) or cytokine receptors. May be involved in the derepression of host interleukin IL2 expression. Mediates the activation of cyclin-dependent kinases and dysregulation of microtubule network. Tat plays a role in T-cell and neurons apoptosis. Tat induced neurotoxicity and apoptosis probably contribute to neuroAIDS. Host extracellular matrix metalloproteinase MMP1 cleaves Tat and decreases Tat's mediated neurotoxicity. Circulating Tat also acts as a chemokine-like and/or growth factor-like molecule that binds to specific receptors on the surface of the cells, affecting many cellular pathways. In the vascular system, Tat binds to ITGAV/ITGB3 and ITGA5/ITGB1 integrins dimers at the surface of endothelial cells and competes with bFGF for heparin-binding sites, leading to an excess of soluble bFGF. Binds to KDR/VEGFR-2. All these Tat-mediated effects enhance angiogenesis in Kaposi's sarcoma lesions. This chain is Protein Tat, found in Human immunodeficiency virus type 1 group M subtype B (isolate BRVA) (HIV-1).